A 477-amino-acid chain; its full sequence is UDP-N-acetylmuramate--L-alanine ligase (477 aa).

Position 112–118 (112–118 (GTHGKTT)) interacts with ATP.

Belongs to the MurCDEF family.

It localises to the cytoplasm. It catalyses the reaction UDP-N-acetyl-alpha-D-muramate + L-alanine + ATP = UDP-N-acetyl-alpha-D-muramoyl-L-alanine + ADP + phosphate + H(+). The protein operates within cell wall biogenesis; peptidoglycan biosynthesis. Its function is as follows. Cell wall formation. The sequence is that of UDP-N-acetylmuramate--L-alanine ligase from Cupriavidus necator (strain ATCC 17699 / DSM 428 / KCTC 22496 / NCIMB 10442 / H16 / Stanier 337) (Ralstonia eutropha).